We begin with the raw amino-acid sequence, 92 residues long: MANTTSAKKATRKIARRTDVNKARRSRVRTFVRQVEEAIASGDADKAKAAFLAAQPELARAASKGVLHSNTASRKVSRLAARVKALSVSPTA.

The interval 1 to 24 (MANTTSAKKATRKIARRTDVNKAR) is disordered.

It belongs to the bacterial ribosomal protein bS20 family.

Binds directly to 16S ribosomal RNA. This Rhizobium etli (strain ATCC 51251 / DSM 11541 / JCM 21823 / NBRC 15573 / CFN 42) protein is Small ribosomal subunit protein bS20.